The primary structure comprises 121 residues: Small ribosomal subunit protein uS13 (121 aa).

The disordered stretch occupies residues histidine 91–lysine 121.

The protein belongs to the universal ribosomal protein uS13 family. In terms of assembly, part of the 30S ribosomal subunit. Forms a loose heterodimer with protein S19. Forms two bridges to the 50S subunit in the 70S ribosome.

Its function is as follows. Located at the top of the head of the 30S subunit, it contacts several helices of the 16S rRNA. In the 70S ribosome it contacts the 23S rRNA (bridge B1a) and protein L5 of the 50S subunit (bridge B1b), connecting the 2 subunits; these bridges are implicated in subunit movement. Contacts the tRNAs in the A and P-sites. The sequence is that of Small ribosomal subunit protein uS13 from Staphylococcus haemolyticus (strain JCSC1435).